A 231-amino-acid chain; its full sequence is Demethylmenaquinone methyltransferase (231 aa).

S-adenosyl-L-methionine-binding positions include T62, D80, 100–101 (DA), and S117.

This sequence belongs to the class I-like SAM-binding methyltransferase superfamily. MenG/UbiE family.

The enzyme catalyses a 2-demethylmenaquinol + S-adenosyl-L-methionine = a menaquinol + S-adenosyl-L-homocysteine + H(+). The protein operates within quinol/quinone metabolism; menaquinone biosynthesis; menaquinol from 1,4-dihydroxy-2-naphthoate: step 2/2. Methyltransferase required for the conversion of demethylmenaquinol (DMKH2) to menaquinol (MKH2). The sequence is that of Demethylmenaquinone methyltransferase from Mycobacterium marinum (strain ATCC BAA-535 / M).